The following is a 160-amino-acid chain: Type IV major fimbrial protein FimA (160 aa).

The propeptide at 1 to 7 is leader sequence; that stretch reads MKSLQKG. At Phe-8 the chain carries N-methylphenylalanine. The chain crosses the membrane as a helical span at residues 8–28; it reads FTLIELMIVVAIIGILAAFAI. Cys-63 and Cys-106 are joined by a disulfide.

It belongs to the N-Me-Phe pilin family. As to quaternary structure, the pili are polar flexible filaments of about 5.4 nanometers diameter and 2.5 micrometers average length; they consist of only a single polypeptide chain arranged in a helical configuration of five subunits per turn in the assembled pilus.

The protein resides in the fimbrium. It localises to the membrane. Its function is as follows. Major component of the type IV fimbriae that plays an essential role in twitching motility, natural transformation, and protease secretion. The polypeptide is Type IV major fimbrial protein FimA (fimA) (Dichelobacter nodosus (Bacteroides nodosus)).